The primary structure comprises 166 residues: SsrA-binding protein (166 aa).

Belongs to the SmpB family.

Its subcellular location is the cytoplasm. Functionally, required for rescue of stalled ribosomes mediated by trans-translation. Binds to transfer-messenger RNA (tmRNA), required for stable association of tmRNA with ribosomes. tmRNA and SmpB together mimic tRNA shape, replacing the anticodon stem-loop with SmpB. tmRNA is encoded by the ssrA gene; the 2 termini fold to resemble tRNA(Ala) and it encodes a 'tag peptide', a short internal open reading frame. During trans-translation Ala-aminoacylated tmRNA acts like a tRNA, entering the A-site of stalled ribosomes, displacing the stalled mRNA. The ribosome then switches to translate the ORF on the tmRNA; the nascent peptide is terminated with the 'tag peptide' encoded by the tmRNA and targeted for degradation. The ribosome is freed to recommence translation, which seems to be the essential function of trans-translation. This Parasynechococcus marenigrum (strain WH8102) protein is SsrA-binding protein.